Reading from the N-terminus, the 135-residue chain is Holo-[acyl-carrier-protein] synthase (135 aa).

Aspartate 8 and glutamate 58 together coordinate Mg(2+).

Belongs to the P-Pant transferase superfamily. AcpS family. Mg(2+) is required as a cofactor.

The protein resides in the cytoplasm. The catalysed reaction is apo-[ACP] + CoA = holo-[ACP] + adenosine 3',5'-bisphosphate + H(+). In terms of biological role, transfers the 4'-phosphopantetheine moiety from coenzyme A to a Ser of acyl-carrier-protein. This Leuconostoc citreum (strain KM20) protein is Holo-[acyl-carrier-protein] synthase.